Reading from the N-terminus, the 165-residue chain is AIG2-like protein A (165 aa).

15-20 (YGSFQD) is a substrate binding site. Glu83 serves as the catalytic Proton acceptor.

It belongs to the gamma-glutamylcyclotransferase family. In terms of tissue distribution, expressed only in seeds.

In terms of biological role, putative gamma-glutamylcyclotransferase. The polypeptide is AIG2-like protein A (Arabidopsis thaliana (Mouse-ear cress)).